A 95-amino-acid polypeptide reads, in one-letter code: Probable FAD-linked sulfhydryl oxidase OPG072 (95 aa).

At Met-1–Arg-8 the chain is on the intravirion side. The ERV/ALR sulfhydryl oxidase domain maps to Met-1–Leu-95. The helical transmembrane segment at Ala-9 to Gly-25 threads the bilayer. The Virion surface portion of the chain corresponds to Asn-26 to Leu-95. Cys-43 and Cys-46 are disulfide-bonded.

This sequence belongs to the orthopoxvirus OPG072 family. In terms of assembly, interacts with OPG128; this interaction involves formation of a transient disulfide-bonded intermediate, allowing disulfide bond transfer. FAD is required as a cofactor.

It is found in the virion membrane. The protein localises to the host cytoplasm. It catalyses the reaction 2 R'C(R)SH + O2 = R'C(R)S-S(R)CR' + H2O2. Functionally, FAD-dependent sulfhydryl oxidase that catalyzes disulfide bond formation. The complete pathway for formation of disulfide bonds in intracellular virion membrane proteins sequentially involves thiol-disulfide transfer between OPG072, OPG128 and OPG088. This is Probable FAD-linked sulfhydryl oxidase OPG072 (OPG072) from Variola virus (isolate Human/India/Ind3/1967) (VARV).